The chain runs to 430 residues: Dihydrolipoyllysine-residue acetyltransferase component of pyruvate dehydrogenase complex (430 aa).

A Lipoyl-binding domain is found at A2–D77. N6-lipoyllysine is present on K43. The segment at D80–R122 is disordered. Residues M84 to A104 show a composition bias toward basic and acidic residues. The Peripheral subunit-binding (PSBD) domain maps to K125–L162. Residues G164 to P199 form a disordered region. Residues A166–S193 are compositionally biased toward low complexity. H401 is an active-site residue.

Belongs to the 2-oxoacid dehydrogenase family. Forms a 24-polypeptide structural core with octahedral symmetry. It depends on (R)-lipoate as a cofactor.

The enzyme catalyses N(6)-[(R)-dihydrolipoyl]-L-lysyl-[protein] + acetyl-CoA = N(6)-[(R)-S(8)-acetyldihydrolipoyl]-L-lysyl-[protein] + CoA. The pyruvate dehydrogenase complex catalyzes the overall conversion of pyruvate to acetyl-CoA and CO(2). It contains multiple copies of three enzymatic components: pyruvate dehydrogenase (E1), dihydrolipoamide acetyltransferase (E2) and lipoamide dehydrogenase (E3). The polypeptide is Dihydrolipoyllysine-residue acetyltransferase component of pyruvate dehydrogenase complex (pdhC) (Staphylococcus aureus (strain Mu50 / ATCC 700699)).